The following is a 261-amino-acid chain: Zinc finger protein 664 (261 aa).

9 consecutive C2H2-type zinc fingers follow at residues 3–25, 31–53, 59–81, 87–109, 115–137, 143–165, 171–193, 199–221, and 227–249; these read YKCP…QKIH, HKCD…WRDH, YKCD…KKIH, YKCY…MRVH, YVCS…QRVH, FKCE…QRVH, YKCY…QRVH, YRCC…QRVH, and FKCD…QRVH. Residue Lys-257 forms a Glycyl lysine isopeptide (Lys-Gly) (interchain with G-Cter in SUMO2) linkage.

Belongs to the krueppel C2H2-type zinc-finger protein family.

The protein resides in the nucleus. Functionally, may be involved in transcriptional regulation. This chain is Zinc finger protein 664 (Znf664), found in Mus musculus (Mouse).